The chain runs to 188 residues: Sulfopyruvate decarboxylase subunit beta (188 aa).

Belongs to the TPP enzyme family. As to quaternary structure, heterododecamer composed of 6 subunits alpha and 6 subunits beta. Thiamine diphosphate serves as cofactor.

It catalyses the reaction 3-sulfopyruvate + H(+) = sulfoacetaldehyde + CO2. The protein operates within cofactor biosynthesis; coenzyme M biosynthesis; sulfoacetaldehyde from phosphoenolpyruvate and sulfite: step 4/4. With respect to regulation, inhibited by oxygen when heated in air at 80 degrees Celsius. The enzyme is reactivated by addition of dithionite. Involved in the biosynthesis of the coenzyme M (2-mercaptoethanesulfonic acid). Catalyzes the decarboxylation of sulfopyruvate to sulfoacetaldehyde. This chain is Sulfopyruvate decarboxylase subunit beta, found in Methanocaldococcus jannaschii (strain ATCC 43067 / DSM 2661 / JAL-1 / JCM 10045 / NBRC 100440) (Methanococcus jannaschii).